We begin with the raw amino-acid sequence, 154 residues long: Flagellar assembly factor FliW (154 aa).

Belongs to the FliW family. In terms of assembly, interacts with translational regulator CsrA and flagellin(s).

It is found in the cytoplasm. In terms of biological role, acts as an anti-CsrA protein, binds CsrA and prevents it from repressing translation of its target genes, one of which is flagellin. Binds to flagellin and participates in the assembly of the flagellum. This chain is Flagellar assembly factor FliW, found in Carboxydothermus hydrogenoformans (strain ATCC BAA-161 / DSM 6008 / Z-2901).